We begin with the raw amino-acid sequence, 372 residues long: Galanin receptor type 2 (372 aa).

The Extracellular segment spans residues 1–28 (MNGSGSQGAENTSQEGGSGGWQPEAVLV). N-linked (GlcNAc...) asparagine glycosylation is found at asparagine 2 and asparagine 11. Residues 29 to 49 (PLFFALIFLVGTVGNALVLAV) traverse the membrane as a helical segment. Residues 50-60 (LLRGGQAVSTT) are Cytoplasmic-facing. The chain crosses the membrane as a helical span at residues 61–81 (NLFILNLGVADLCFILCCVPF). Over 82-99 (QATIYTLDDWVFGSLLCK) the chain is Extracellular. A disulfide bond links cysteine 98 and cysteine 175. Residues 100–121 (AVHFLIFLTMHASSFTLAAVSL) traverse the membrane as a helical segment. Residues 122 to 141 (DRYLAIRYPLHSRELRTPRN) are Cytoplasmic-facing. A helical membrane pass occupies residues 142 to 162 (ALAAIGLIWGLALLFSGPYLS). Topologically, residues 163–187 (YYRQSQLANLTVCHPAWSAPRRRAM) are extracellular. Residues 188–208 (DLCTFVFSYLLPVLVLSLTYA) traverse the membrane as a helical segment. Residues 209-237 (RTLRYLWRTVDPVTAGSGSQRAKRKVTRM) are Cytoplasmic-facing. The helical transmembrane segment at 238 to 258 (IIIVAVLFCLCWMPHHALILC) threads the bilayer. Residues 259 to 260 (VW) are Extracellular-facing. Residues 261–281 (FGRFPLTRATYALRILSHLVS) form a helical membrane-spanning segment. Over 282-372 (YANSCVNPIV…ASSRTLDPAC (91 aa)) the chain is Cytoplasmic. The tract at residues 353-372 (VPPPALPNCTASSRTLDPAC) is disordered. Positions 361 to 372 (CTASSRTLDPAC) are enriched in polar residues.

It belongs to the G-protein coupled receptor 1 family.

The protein resides in the cell membrane. In terms of biological role, receptor for the hormone galanin, GALP and spexin-1. The activity of this receptor is mediated by G proteins that activate the phospholipase C/protein kinase C pathway (via G(q)) and that inhibit adenylyl cyclase (via G(i)). The sequence is that of Galanin receptor type 2 (Galr2) from Rattus norvegicus (Rat).